Reading from the N-terminus, the 227-residue chain is Interleukin-6 (227 aa).

An N-terminal signal peptide occupies residues 1-22 (MASISYLLAPLVLAAVLQPTAG). The segment at 24–45 (PLDAPTESPAGETSGEEAETGS) is disordered. A disulfide bridge connects residues Cys93 and Cys103.

It belongs to the IL-6 superfamily. In terms of assembly, component of a hexamer of two molecules each of IL6, IL6R and IL6ST; first binds to IL6R to associate with the signaling subunit IL6ST. In terms of tissue distribution, after induction, highly expressed in spleen. Can also be expressed in kidney after incubation with PHA.

Its subcellular location is the secreted. Functionally, cytokine with a wide variety of biological functions in immunity, tissue regeneration, and metabolism. Binds to IL6R, then the complex associates to the signaling subunit IL6ST/gp130 to trigger the intracellular IL6-signaling pathway. The interaction with the membrane-bound IL6R and IL6ST stimulates 'classic signaling', whereas the binding of IL6 and soluble IL6R to IL6ST stimulates 'trans-signaling'. Alternatively, 'cluster signaling' occurs when membrane-bound IL6:IL6R complexes on transmitter cells activate IL6ST receptors on neighboring receiver cells. In Takifugu rubripes (Japanese pufferfish), this protein is Interleukin-6 (il6).